A 188-amino-acid chain; its full sequence is Pyridoxal 5'-phosphate synthase subunit PdxT (188 aa).

46–48 (GES) provides a ligand contact to L-glutamine. C78 serves as the catalytic Nucleophile. Residues R105 and 134–135 (IR) contribute to the L-glutamine site. Catalysis depends on charge relay system residues H170 and E172.

This sequence belongs to the glutaminase PdxT/SNO family. In terms of assembly, in the presence of PdxS, forms a dodecamer of heterodimers. Only shows activity in the heterodimer.

It catalyses the reaction aldehydo-D-ribose 5-phosphate + D-glyceraldehyde 3-phosphate + L-glutamine = pyridoxal 5'-phosphate + L-glutamate + phosphate + 3 H2O + H(+). The enzyme catalyses L-glutamine + H2O = L-glutamate + NH4(+). It participates in cofactor biosynthesis; pyridoxal 5'-phosphate biosynthesis. Functionally, catalyzes the hydrolysis of glutamine to glutamate and ammonia as part of the biosynthesis of pyridoxal 5'-phosphate. The resulting ammonia molecule is channeled to the active site of PdxS. In Clostridium kluyveri (strain ATCC 8527 / DSM 555 / NBRC 12016 / NCIMB 10680 / K1), this protein is Pyridoxal 5'-phosphate synthase subunit PdxT.